We begin with the raw amino-acid sequence, 888 residues long: Alanine--tRNA ligase (888 aa).

Histidine 573, histidine 577, cysteine 676, and histidine 680 together coordinate Zn(2+).

The protein belongs to the class-II aminoacyl-tRNA synthetase family. The cofactor is Zn(2+).

It is found in the cytoplasm. The catalysed reaction is tRNA(Ala) + L-alanine + ATP = L-alanyl-tRNA(Ala) + AMP + diphosphate. Functionally, catalyzes the attachment of alanine to tRNA(Ala) in a two-step reaction: alanine is first activated by ATP to form Ala-AMP and then transferred to the acceptor end of tRNA(Ala). Also edits incorrectly charged Ser-tRNA(Ala) and Gly-tRNA(Ala) via its editing domain. The chain is Alanine--tRNA ligase from Corynebacterium diphtheriae (strain ATCC 700971 / NCTC 13129 / Biotype gravis).